The sequence spans 523 residues: Tryptophan 6-halogenase SttH (523 aa).

Positions 14, 40, 43, 46, 48, and 51 each coordinate FAD. Lysine 79 is an active-site residue. Residue proline 97 participates in L-tryptophan binding. FAD-binding residues include valine 203 and leucine 354. Residues threonine 365 and glycine 366 each contribute to the chloride site. Residue isoleucine 367 participates in FAD binding. L-tryptophan-binding residues include tyrosine 456 and tyrosine 457.

Belongs to the flavin-dependent halogenase family. Bacterial tryptophan halogenase subfamily. In terms of assembly, homodimer.

It carries out the reaction L-tryptophan + FADH2 + chloride + O2 = 6-chloro-L-tryptophan + FAD + 2 H2O. The catalysed reaction is D-tryptophan + FADH2 + chloride + O2 = 6-chloro-D-tryptophan + FAD + 2 H2O. Functionally, catalyzes the chlorination of tryptophan (Trp) at C6 position to yield 6-chloro-tryptophan. Accepts both L and D-Trp as the substrates. The enzyme also uses bromide to yield 6-bromo-Trp. In vitro, can also catalyze the halogenation of 3-indolepropionic acid, N-methyltryptophan and non-indolic aromatic substrates such as kynurenine, anthranilamide and N-phenylanthranilic acid. The polypeptide is Tryptophan 6-halogenase SttH (Streptomyces toxytricini (Actinomyces toxytricini)).